A 206-amino-acid polypeptide reads, in one-letter code: Accelerated cell death 11 (206 aa).

Positions 60, 64, 99, 103, and 143 each coordinate an N-acylsphingoid base 1-phosphate.

Belongs to the GLTP family. In terms of assembly, interacts with BPA1, PRA1F2 and PRA1F3.

It localises to the cytoplasm. Functionally, exhibits selective intermembrane transfer of ceramide-1-phosphate (C1P) and phytoceramide-1-phosphate. Does not transport ceramide (Cer) or GalCer, suggesting a requirement for phosphate in the headgroup for functionality. Transports in vitro sphingosine, but not glycosphingolipids. Also has some in vitro activity with sphingomyelin, a lipid not detected in plant tissues. The transport function may be not directly involved in regulating cell death. Rather, perturbations in the function of ACD11 or related components could be monitored by R-proteins, which then mediate defense and programmed cell death (PCD), as proposed in the guard hypothesis. C1P transfer is stimulated by phosphatidylserine in C1P source vesicles. Regulates autophagy, inflammasome mediated IL1B and IL18 processing, and pyroptosis, but not apoptosis. The protein is Accelerated cell death 11 of Arabidopsis thaliana (Mouse-ear cress).